Consider the following 529-residue polypeptide: Cytochrome P450 monooxygenase atmQ (529 aa).

The next 2 helical transmembrane spans lie at 22–42 (YPFA…QQLA) and 51–71 (SWVN…IAAF). A heme-binding site is contributed by Cys467.

This sequence belongs to the cytochrome P450 family. Requires heme as cofactor.

Its subcellular location is the membrane. It participates in secondary metabolite biosynthesis. Its function is as follows. Cytochrome P450 monooxygenase; part of the ATM2 gene cluster that mediates the biosynthesis of aflatrem, a tremorgenic mycotoxin with acute neurotoxic effects. Synthesis of geranylgeranyl diphosphate (GGPP) by AtmG (a GGPP synthase) precedes condensation of GGPP with indole 3-glycerol phosphate, followed by epoxidation and cyclization by AtmM (a FAD-dependent monooxygenase) and AtmC (a prenyltransferase) to produce paspaline. AtmB is also essential for paspaline production, but its exact role has not been identified yet. AtmP, a cytochrome P450 monooxygenase, subsequently converts paspaline to 13-desoxypaxilline via PC-M6 by removal of the C-30 methyl group and oxidation at C-10. AtmQ, a cytochrome P450 monooxygenase, then catalyzes the oxidation of 13-desoxypaxilline, first at C-7 to produce paspalicine and then at C-13 to form paspalinine. Finally, AtmD prenylates paspalinine to form aflatrem. In Aspergillus flavus, this protein is Cytochrome P450 monooxygenase atmQ.